The following is a 2877-amino-acid chain: Desmoplakin (2877 aa).

Residues 1–20 (MSCNGGSHPRINTLGRMTRA) form a disordered region. The tract at residues 1 to 591 (MSCNGGSHPR…DYMKTIEDLE (591 aa)) is interaction with PKP1, JUP, PKP2. Positions 1–1063 (MSCNGGSHPR…ANSENCNKNK (1063 aa)) are globular 1. A phosphoserine mark is found at serine 22 and serine 62. Tyrosine 65 carries the phosphotyrosine modification. The residue at position 70 (threonine 70) is a Phosphothreonine. A phosphoserine mark is found at serine 174, serine 175, and serine 183. 2 Spectrin repeats span residues 185-278 (SGWD…HLRQ) and 279-382 (LQNI…LKEN). Residues 383 to 453 (AAYFQFFEEA…NLVNKSKKIV (71 aa)) form a Spectrin 3a repeat. One can recognise an SH3 domain in the interval 465–522 (NKPIILRALCDYKQDQKIVHKGDECILKDNNERSKWYVTGPGGVDMLVPSVGLIIPPP). One copy of the Spectrin 3b repeat lies at 523-552 (NPLAVDLSCKIEQYYEAILALWNQLYINMK). Spectrin repeat units follow at residues 553-634 (SLVS…IQLP), 661-776 (VIET…SLCS), and 777-890 (VRAL…DLEK). 4 coiled-coil regions span residues 1034-1280 (LKLK…AEEN), 1313-1354 (NARH…YENE), 1395-1443 (TSGY…QKAS), and 1473-1926 (KQSL…KLED). A central fibrous rod domain region spans residues 1064–1952 (FLDQNLQKYQ…QKEIDKLRQR (889 aa)). Serine 1665, serine 1715, and serine 2031 each carry phosphoserine. The interval 1953–2877 (PYGSHRETQT…YSFSSSSIGY (925 aa)) is globular 2. Residues 1967–2215 (TVDSSKLVFD…LLLSVQKRSM (249 aa)) are 4.5 X 38 AA tandem repeats (Domain A). Plectin repeat units follow at residues 2016 to 2052 (QPFLRGAGAIAGASASPKEKYSLVEAKRKKFITPEST), 2053 to 2090 (VMLLEAQAATGGIIDPHRNEKLTVDNAIARDLIDFDDR), 2091 to 2128 (QQIYTAEKAITGFDDPFSGKTVSVSEAIKKNLIDRETG), 2129 to 2166 (MRLLEAQLASGGVVDPVNSVFLPKDVALARGLIDRDLY), 2170 to 2204 (NDPRDSQKNFVDPITKKKVSYMQLRERCRIEPHTG), 2205 to 2240 (LLLLSVQKRSMSFQGIRQPVTVTELVDSGILRPSTV), 2258 to 2295 (KDFLQGSSCIAGIYNETTKQKLGIYEAMKIGLVRPGTA), 2296 to 2333 (LELLEAQAATGFIVDPVSNLRLPVEEAYKRGLVGIEFK), 2334 to 2371 (EKLLSAERAVTGYNDPETGNIISLFQAMNKELIEKGHG), 2372 to 2409 (IRLLEAQIATGGIIDPKESHRLPVDMAYKRGYFNEELS), 2413 to 2447 (SDPSDDTKGFFDPNTEENLTYLQLKERCIKDEETG), 2463 to 2500 (SQKNTLRKRRVVIVDPETNKEMSVQEAYKKGLIDYETF), 2514 to 2551 (TITGSDGSTRVVLVDRKTGSQYDIQDAIDKGLVDRKFF), 2617 to 2654 (SDPLEESSPIAAIFDTENLEKISITEGIERGIVDSITG), 2655 to 2692 (QRLLEAQACTGGIIHPTTGQKLSLQDAVSQGLIDQDMA), 2731 to 2768 (QRFLEFQFLTGGLVDPEVHGRISTEEAIRKGFIDGRAA), and 2769 to 2806 (QRLQDISSYAKILTCPKTKLKISYKDAMNRSMVEDITG). Phosphoserine occurs at positions 2214, 2216, and 2232. Residues 2251–2453 (DEVGERIKDF…EETGLCLLPL (203 aa)) form a 4.5 X 38 AA tandem repeats (Domain B) region. The stretch at 2603-2628 (ISSVRNLTIRSSSLSDPLEESSPIAA) is one LRR 15 repeat. The tract at residues 2616–2828 (LSDPLEESSP…GLPSPYNMSA (213 aa)) is 4.5 X 38 AA tandem repeats (Domain C). 2 positions are modified to phosphoserine: serine 2817 and serine 2822. The disordered stretch occupies residues 2817 to 2877 (SKGLPSPYNM…YSFSSSSIGY (61 aa)). Tyrosine 2824 bears the Phosphotyrosine mark. Phosphoserine is present on residues serine 2827 and serine 2831. The tract at residues 2830-2853 (GSRSGSRSGSRSGSRSGSRSGSRR) is 6 X 4 AA tandem repeats of G-S-R-[SR]. Low complexity predominate over residues 2830 to 2853 (GSRSGSRSGSRSGSRSGSRSGSRR). Arginine 2832 and arginine 2853 each carry omega-N-methylarginine. Position 2855 is a phosphoserine (serine 2855). Threonine 2859 is modified (phosphothreonine). Residues 2862-2877 (SSYSYSYSFSSSSIGY) show a composition bias toward low complexity. A Phosphoserine modification is found at serine 2874.

Belongs to the plakin or cytolinker family. As to quaternary structure, homodimer. Interacts with COL17A1 (via cytoplasmic region). Interacts with DSC2. Interacts with PKP1. Interacts with PKP2. Interacts weakly with TMEM65. Post-translationally, phosphorylation at Ser-2855 increases association with intermediate filament cytokeratin, potentially facilitating interaction between desmosome junctions and intermediate filament architecture. In terms of tissue distribution, expressed in cardiomyocytes (at protein level).

The protein localises to the cell junction. Its subcellular location is the desmosome. It localises to the cell membrane. It is found in the cytoplasm. Major high molecular weight protein of desmosomes. Regulates profibrotic gene expression in cardiomyocytes via activation of the MAPK14/p38 MAPK signaling cascade and increase in TGFB1 protein abundance. The chain is Desmoplakin from Rattus norvegicus (Rat).